The following is a 407-amino-acid chain: Multifunctional CCA protein (407 aa).

ATP-binding residues include Gly-8 and Arg-11. The CTP site is built by Gly-8 and Arg-11. Residues Asp-21 and Asp-23 each coordinate Mg(2+). ATP-binding residues include Arg-91, Arg-137, and Arg-140. The CTP site is built by Arg-91, Arg-137, and Arg-140. One can recognise an HD domain in the interval 228 to 329 (TGIHTLMVAQ…IKIFDKMDVW (102 aa)).

The protein belongs to the tRNA nucleotidyltransferase/poly(A) polymerase family. Bacterial CCA-adding enzyme type 1 subfamily. Monomer. Can also form homodimers and oligomers. Requires Mg(2+) as cofactor. The cofactor is Ni(2+).

It catalyses the reaction a tRNA precursor + 2 CTP + ATP = a tRNA with a 3' CCA end + 3 diphosphate. The enzyme catalyses a tRNA with a 3' CCA end + 2 CTP + ATP = a tRNA with a 3' CCACCA end + 3 diphosphate. Catalyzes the addition and repair of the essential 3'-terminal CCA sequence in tRNAs without using a nucleic acid template. Adds these three nucleotides in the order of C, C, and A to the tRNA nucleotide-73, using CTP and ATP as substrates and producing inorganic pyrophosphate. tRNA 3'-terminal CCA addition is required both for tRNA processing and repair. Also involved in tRNA surveillance by mediating tandem CCA addition to generate a CCACCA at the 3' terminus of unstable tRNAs. While stable tRNAs receive only 3'-terminal CCA, unstable tRNAs are marked with CCACCA and rapidly degraded. The protein is Multifunctional CCA protein of Aliivibrio fischeri (strain ATCC 700601 / ES114) (Vibrio fischeri).